Here is a 124-residue protein sequence, read N- to C-terminus: Small ribosomal subunit protein uS12 (124 aa).

A disordered region spans residues 1–25; sequence MATINQLVRKPRQATTYKSASPALD. Position 89 is a 3-methylthioaspartic acid (D89).

The protein belongs to the universal ribosomal protein uS12 family. In terms of assembly, part of the 30S ribosomal subunit. Contacts proteins S8 and S17. May interact with IF1 in the 30S initiation complex.

Its function is as follows. With S4 and S5 plays an important role in translational accuracy. In terms of biological role, interacts with and stabilizes bases of the 16S rRNA that are involved in tRNA selection in the A site and with the mRNA backbone. Located at the interface of the 30S and 50S subunits, it traverses the body of the 30S subunit contacting proteins on the other side and probably holding the rRNA structure together. The combined cluster of proteins S8, S12 and S17 appears to hold together the shoulder and platform of the 30S subunit. The polypeptide is Small ribosomal subunit protein uS12 (Stenotrophomonas maltophilia (strain R551-3)).